Here is a 391-residue protein sequence, read N- to C-terminus: Phosphoglycerate kinase (391 aa).

Substrate contacts are provided by residues 21-23 (DLN), Arg-36, 59-62 (HLGR), Arg-113, and Arg-146. ATP-binding positions include Lys-197, Glu-319, and 345–348 (GGDT).

This sequence belongs to the phosphoglycerate kinase family. In terms of assembly, monomer.

It localises to the cytoplasm. It catalyses the reaction (2R)-3-phosphoglycerate + ATP = (2R)-3-phospho-glyceroyl phosphate + ADP. It participates in carbohydrate degradation; glycolysis; pyruvate from D-glyceraldehyde 3-phosphate: step 2/5. In Shewanella sediminis (strain HAW-EB3), this protein is Phosphoglycerate kinase.